The following is a 1700-amino-acid chain: Balbiani ring protein 3 (1700 aa).

The N-terminal stretch at 1 to 20 (MKTLSSLLLVLAVNVLLIQA) is a signal peptide.

As to expression, salivary gland.

Its subcellular location is the secreted. In terms of biological role, used by the larvae to construct a supramolecular structure, the larval tube. Balbiani ring protein 3 could play a role as a transport protein that binds to other proteins intracellularly and in the gland lumen in order to prevent these from forming water-insoluble fibers too early. This is Balbiani ring protein 3 (BR3) from Chironomus tentans (Midge).